A 162-amino-acid polypeptide reads, in one-letter code: NADH-quinone oxidoreductase subunit I (162 aa).

2 4Fe-4S ferredoxin-type domains span residues 54-83 and 93-122; these read RRYE…IESE and TRYD…ETQI. Residues C63, C66, C69, C73, C102, C105, C108, and C112 each contribute to the [4Fe-4S] cluster site.

The protein belongs to the complex I 23 kDa subunit family. NDH-1 is composed of 14 different subunits. Subunits NuoA, H, J, K, L, M, N constitute the membrane sector of the complex. The cofactor is [4Fe-4S] cluster.

The protein resides in the cell inner membrane. The catalysed reaction is a quinone + NADH + 5 H(+)(in) = a quinol + NAD(+) + 4 H(+)(out). NDH-1 shuttles electrons from NADH, via FMN and iron-sulfur (Fe-S) centers, to quinones in the respiratory chain. The immediate electron acceptor for the enzyme in this species is believed to be ubiquinone. Couples the redox reaction to proton translocation (for every two electrons transferred, four hydrogen ions are translocated across the cytoplasmic membrane), and thus conserves the redox energy in a proton gradient. This Burkholderia cenocepacia (strain ATCC BAA-245 / DSM 16553 / LMG 16656 / NCTC 13227 / J2315 / CF5610) (Burkholderia cepacia (strain J2315)) protein is NADH-quinone oxidoreductase subunit I.